Here is a 232-residue protein sequence, read N- to C-terminus: Large ribosomal subunit protein uL1 (232 aa).

Belongs to the universal ribosomal protein uL1 family. Part of the 50S ribosomal subunit.

Its function is as follows. Binds directly to 23S rRNA. The L1 stalk is quite mobile in the ribosome, and is involved in E site tRNA release. Protein L1 is also a translational repressor protein, it controls the translation of the L11 operon by binding to its mRNA. The sequence is that of Large ribosomal subunit protein uL1 from Chlamydia trachomatis serovar L2 (strain ATCC VR-902B / DSM 19102 / 434/Bu).